We begin with the raw amino-acid sequence, 488 residues long: N-succinylglutamate 5-semialdehyde dehydrogenase (488 aa).

Residue 221-226 coordinates NAD(+); sequence GSSRTG. Active-site residues include glutamate 244 and cysteine 278.

Belongs to the aldehyde dehydrogenase family. AstD subfamily.

It catalyses the reaction N-succinyl-L-glutamate 5-semialdehyde + NAD(+) + H2O = N-succinyl-L-glutamate + NADH + 2 H(+). It participates in amino-acid degradation; L-arginine degradation via AST pathway; L-glutamate and succinate from L-arginine: step 4/5. Functionally, catalyzes the NAD-dependent reduction of succinylglutamate semialdehyde into succinylglutamate. This chain is N-succinylglutamate 5-semialdehyde dehydrogenase, found in Pseudomonas fluorescens (strain SBW25).